The sequence spans 155 residues: Small ribosomal subunit protein uS7 (155 aa).

Belongs to the universal ribosomal protein uS7 family. As to quaternary structure, part of the 30S ribosomal subunit. Contacts proteins S9 and S11.

In terms of biological role, one of the primary rRNA binding proteins, it binds directly to 16S rRNA where it nucleates assembly of the head domain of the 30S subunit. Is located at the subunit interface close to the decoding center, probably blocks exit of the E-site tRNA. The chain is Small ribosomal subunit protein uS7 from Thermotoga neapolitana (strain ATCC 49049 / DSM 4359 / NBRC 107923 / NS-E).